The following is a 51-amino-acid chain: uncharacterized protein (51 aa).

The chain crosses the membrane as a helical span at residues 10–29 (LFLYHPLFLLLLYIYLVLFI).

The protein resides in the plastid. The protein localises to the chloroplast membrane. This is an uncharacterized protein from Anthoceros angustus (Hornwort).